Consider the following 951-residue polypeptide: Valine--tRNA ligase (951 aa).

Residues 40 to 50 (PNVTGSLHMGH) carry the 'HIGH' region motif. Residues 551 to 555 (KMSKS) carry the 'KMSKS' region motif. Lys554 contributes to the ATP binding site. A coiled-coil region spans residues 879-950 (MAGLIDVEAE…LLEQKAKIES (72 aa)).

The protein belongs to the class-I aminoacyl-tRNA synthetase family. ValS type 1 subfamily. As to quaternary structure, monomer.

The protein resides in the cytoplasm. The catalysed reaction is tRNA(Val) + L-valine + ATP = L-valyl-tRNA(Val) + AMP + diphosphate. Catalyzes the attachment of valine to tRNA(Val). As ValRS can inadvertently accommodate and process structurally similar amino acids such as threonine, to avoid such errors, it has a 'posttransfer' editing activity that hydrolyzes mischarged Thr-tRNA(Val) in a tRNA-dependent manner. The protein is Valine--tRNA ligase of Pseudoalteromonas translucida (strain TAC 125).